Consider the following 177-residue polypeptide: Nucleoside triphosphate/diphosphate phosphatase (177 aa).

Arg-23 functions as the Proton donor in the catalytic mechanism. Mg(2+) contacts are provided by Asn-87, Asp-103, Asp-105, Asp-107, Asp-120, and Glu-123.

Belongs to the Ntdp family. Requires Mg(2+) as cofactor.

The catalysed reaction is a ribonucleoside 5'-triphosphate + H2O = a ribonucleoside 5'-diphosphate + phosphate + H(+). It carries out the reaction a ribonucleoside 5'-diphosphate + H2O = a ribonucleoside 5'-phosphate + phosphate + H(+). Functionally, has nucleoside phosphatase activity towards nucleoside triphosphates and nucleoside diphosphates. This chain is Nucleoside triphosphate/diphosphate phosphatase, found in Streptococcus sanguinis (strain SK36).